We begin with the raw amino-acid sequence, 449 residues long: Allantoinase (449 aa).

Residues H61, H63, K148, H184, H240, and D313 each contribute to the Zn(2+) site. Position 148 is an N6-carboxylysine (K148).

This sequence belongs to the metallo-dependent hydrolases superfamily. Allantoinase family. As to quaternary structure, homotetramer. It depends on Zn(2+) as a cofactor. In terms of processing, carboxylation allows a single lysine to coordinate two zinc ions.

It carries out the reaction (S)-allantoin + H2O = allantoate + H(+). It participates in nitrogen metabolism; (S)-allantoin degradation; allantoate from (S)-allantoin: step 1/1. Its function is as follows. Catalyzes the conversion of allantoin (5-ureidohydantoin) to allantoic acid by hydrolytic cleavage of the five-member hydantoin ring. This Desulfitobacterium hafniense (strain DSM 10664 / DCB-2) protein is Allantoinase.